The sequence spans 917 residues: Major intrinsically disordered Notch2-binding receptor 1 (917 aa).

Topologically, residues 1–892 (MEANQEASLF…AEFRRAKVCK (892 aa)) are cytoplasmic. 7 disordered regions span residues 337–367 (STYFGPTPVMGTQDTRRCPGRPSKQTPWPAK), 389–410 (SEEKLRYPNSGNQTPNFSGPDR), 457–476 (DKSISCTSGQHSSDTSSVGT), 568–588 (ITNGVSGSKGDKCNRPENVHH), 652–679 (SEAPSDDSASPRVFHAHSGSHGPKLENS), 706–727 (TRPSSRSLTEENSATESKIASI), and 746–783 (NEEEIKDAGPANNKDWHRKSKEADRQYDIPPQHRLPKQ). Residues 460–476 (ISCTSGQHSSDTSSVGT) are compositionally biased toward polar residues. Basic and acidic residues predominate over residues 576-588 (KGDKCNRPENVHH). S712 is modified (phosphoserine). Residues 893-913 (IAALITAAACTVILVIVVPIC) form a helical membrane-spanning segment. The Extracellular portion of the chain corresponds to 914–917 (TMKS).

The protein belongs to the MINAR family. As to quaternary structure, interacts with NOTCH2; this interaction increases MINAR1 stability. Interacts (via N-terminus) with DEPTOR (via PDZ domain); this interaction may stabilize DEPTOR protein by impairing its ubiquitination.

It localises to the cell membrane. Intrinsically disordered protein which may negatively regulate mTOR signaling pathway by stabilizing the mTOR complex component DEPTOR. Negatively regulates angiogenesis. Negatively regulates cell growth. Negatively regulates neurite outgrowth in hippocampal neurons. The polypeptide is Major intrinsically disordered Notch2-binding receptor 1 (Minar1) (Rattus norvegicus (Rat)).